Reading from the N-terminus, the 243-residue chain is Ribonuclease PH (243 aa).

Residues Arg-91 and 129–131 (GTR) contribute to the phosphate site.

It belongs to the RNase PH family. Homohexameric ring arranged as a trimer of dimers.

It carries out the reaction tRNA(n+1) + phosphate = tRNA(n) + a ribonucleoside 5'-diphosphate. In terms of biological role, phosphorolytic 3'-5' exoribonuclease that plays an important role in tRNA 3'-end maturation. Removes nucleotide residues following the 3'-CCA terminus of tRNAs; can also add nucleotides to the ends of RNA molecules by using nucleoside diphosphates as substrates, but this may not be physiologically important. Probably plays a role in initiation of 16S rRNA degradation (leading to ribosome degradation) during starvation. The chain is Ribonuclease PH from Burkholderia mallei (strain NCTC 10247).